The primary structure comprises 406 residues: Tryptophan synthase beta chain (406 aa).

Lys99 is modified (N6-(pyridoxal phosphate)lysine).

The protein belongs to the TrpB family. As to quaternary structure, tetramer of two alpha and two beta chains. Pyridoxal 5'-phosphate serves as cofactor.

The catalysed reaction is (1S,2R)-1-C-(indol-3-yl)glycerol 3-phosphate + L-serine = D-glyceraldehyde 3-phosphate + L-tryptophan + H2O. It functions in the pathway amino-acid biosynthesis; L-tryptophan biosynthesis; L-tryptophan from chorismate: step 5/5. Its function is as follows. The beta subunit is responsible for the synthesis of L-tryptophan from indole and L-serine. The sequence is that of Tryptophan synthase beta chain (trpB) from Caulobacter vibrioides (strain ATCC 19089 / CIP 103742 / CB 15) (Caulobacter crescentus).